The following is a 195-amino-acid chain: MTVERLENGVIVQRNTNEIEISITLDTVHGKLEGSTGVNFFDHLLNTFCHYSGLGLRVSTCESKDGILHHLIEDFGISLGLAFRELFDYTKVRRFGEATVPMNEALVGCYVDLSGRPFFQKNFEFSVEKIEDMPVEGFEEFMCGFVNHARITVHFFKFFGKNDHHISESAMKSFGLAIAKALESSEKKTTKGVID.

The protein belongs to the imidazoleglycerol-phosphate dehydratase family.

The protein resides in the cytoplasm. The enzyme catalyses D-erythro-1-(imidazol-4-yl)glycerol 3-phosphate = 3-(imidazol-4-yl)-2-oxopropyl phosphate + H2O. It functions in the pathway amino-acid biosynthesis; L-histidine biosynthesis; L-histidine from 5-phospho-alpha-D-ribose 1-diphosphate: step 6/9. This is Imidazoleglycerol-phosphate dehydratase from Thermotoga maritima (strain ATCC 43589 / DSM 3109 / JCM 10099 / NBRC 100826 / MSB8).